A 435-amino-acid polypeptide reads, in one-letter code: Arginine/serine-rich coiled-coil protein 2 (435 aa).

Residues 1 to 27 (MAASDTERDGLAPEKTSPDRDKKKEQS) show a composition bias toward basic and acidic residues. The segment at 1 to 230 (MAASDTERDG…PSPPPFRGRN (230 aa)) is disordered. An N-acetylalanine modification is found at Ala2. Position 4 is a phosphoserine (Ser4). Phosphothreonine occurs at positions 6 and 16. Ser17, Ser30, and Ser32 each carry phosphoserine. Residues 35-51 (ASKHHYSRSRSRSRERK) show a composition bias toward basic residues. Residues 66–111 (RSKEARRHESKDKSSKKHKSEEHNDKEHSSDKGRERLNSSENGEDR) are compositionally biased toward basic and acidic residues. Ser104 carries the post-translational modification Phosphoserine. Residues 112-214 (HKRKERKSSR…KRIEKPRRFS (103 aa)) show a composition bias toward basic residues. Positions 230–270 (NTAMDAQEALARRLERAKKLQEQREKEMVEKQKQQEIAAAA) form a coiled coil. Lys376 is covalently cross-linked (Glycyl lysine isopeptide (Lys-Gly) (interchain with G-Cter in SUMO1); alternate). A Glycyl lysine isopeptide (Lys-Gly) (interchain with G-Cter in SUMO2); alternate cross-link involves residue Lys376. Ser377 bears the Phosphoserine mark.

The protein belongs to the RSRC2 family.

This chain is Arginine/serine-rich coiled-coil protein 2 (RSRC2), found in Pongo abelii (Sumatran orangutan).